Consider the following 202-residue polypeptide: Ion-translocating oxidoreductase complex subunit G (202 aa).

The helical transmembrane segment at Ala-11–Ile-31 threads the bilayer. At Thr-176 the chain carries FMN phosphoryl threonine.

Belongs to the RnfG family. In terms of assembly, the complex is composed of six subunits: RnfA, RnfB, RnfC, RnfD, RnfE and RnfG. FMN is required as a cofactor.

It is found in the cell inner membrane. Its function is as follows. Part of a membrane-bound complex that couples electron transfer with translocation of ions across the membrane. The chain is Ion-translocating oxidoreductase complex subunit G from Buchnera aphidicola subsp. Schizaphis graminum (strain Sg).